Reading from the N-terminus, the 117-residue chain is Large ribosomal subunit protein bL19 (117 aa).

It belongs to the bacterial ribosomal protein bL19 family.

Functionally, this protein is located at the 30S-50S ribosomal subunit interface and may play a role in the structure and function of the aminoacyl-tRNA binding site. This chain is Large ribosomal subunit protein bL19, found in Halorhodospira halophila (strain DSM 244 / SL1) (Ectothiorhodospira halophila (strain DSM 244 / SL1)).